Reading from the N-terminus, the 650-residue chain is SUMO-activating enzyme subunit 2 (650 aa).

ATP is bound by residues 25–30, Asp-49, 57–60, Lys-73, 96–97, and 118–123; these read GAGGIG, NLNR, SI, and DNRAAR. Zn(2+)-binding residues include Cys-159 and Cys-162. The active-site Glycyl thioester intermediate is the Cys-174. Lys-191 participates in a covalent cross-link: Glycyl lysine isopeptide (Lys-Gly) (interchain with G-Cter in SUMO). Residue Lys-237 forms a Glycyl lysine isopeptide (Lys-Gly) (interchain with G-Cter in SUMO1) linkage. Residues Lys-258, Lys-282, and Lys-286 each participate in a glycyl lysine isopeptide (Lys-Gly) (interchain with G-Cter in SUMO) cross-link. Positions 446 and 449 each coordinate Zn(2+). The interval 554–650 is disordered; sequence DAPDKAPAPS…DDDEDIIALD (97 aa). A compositionally biased stretch (polar residues) spans 572–586; it reads ANGNKDSAQPSTSSK. Positions 590-603 are enriched in acidic residues; sequence EDDDVLLVDSDEEP. Ser-599 is subject to Phosphoserine. Glycyl lysine isopeptide (Lys-Gly) (interchain with G-Cter in SUMO) cross-links involve residues Lys-618 and Lys-630. Positions 638-650 are enriched in acidic residues; the sequence is PADDDDEDIIALD.

This sequence belongs to the ubiquitin-activating E1 family. As to quaternary structure, heterodimer of sae1 and uba2/sae2. The heterodimer corresponds to the two domains that are encoded on a single polypeptide chain in ubiquitin-activating enzyme E1. Interacts with ube2i. In terms of processing, sumoylated with SUMO1 and SUMO2/3 and by UBC9. Sumoylation at Lys-237 inhibits enzymatic activity. Sumoylation at the C-terminal lysine cluster plays an essential role in nuclear trafficking. In terms of tissue distribution, expressed in eye, brain and pectoral fins.

It localises to the cytoplasm. Its subcellular location is the nucleus. It participates in protein modification; protein sumoylation. The heterodimer acts as an E1 ligase for sumo1, sumo2, and sumo3. It mediates ATP-dependent activation of sumo proteins followed by formation of a thioester bond between a sumo protein and a conserved active site cysteine residue on uba2/sae2. The protein is SUMO-activating enzyme subunit 2 (uba2) of Danio rerio (Zebrafish).